We begin with the raw amino-acid sequence, 255 residues long: Microfibril-associated glycoprotein 4 (255 aa).

An N-terminal signal peptide occupies residues 1–21 (MKALLALPLLLLLSTPPCAPQ). Positions 26 to 28 (RGD) match the Cell attachment site motif. Residues 32–255 (RFCLQQPLDC…KRTEMKIRRA (224 aa)) enclose the Fibrinogen C-terminal domain. N-linked (GlcNAc...) asparagine glycans are attached at residues asparagine 87 and asparagine 137.

Homodimer. Can also form higher oligomers. Interacts with FBN1, FBN2 and LOX. Interacts with COL1A1 in a Ca (2+)-dependent manner. Interacts with ELN in a Ca (2+)-dependent manner; this interaction promotes ELN self-assembly.

It localises to the secreted. It is found in the extracellular space. The protein localises to the extracellular matrix. In terms of biological role, could be involved in calcium-dependent cell adhesion or intercellular interactions. May contribute to the elastic fiber assembly and/or maintenance. This is Microfibril-associated glycoprotein 4 (MFAP4) from Homo sapiens (Human).